The chain runs to 83 residues: Bublin coiled-coil protein (83 aa).

The tract at residues 1–25 (MSGPNGDLGMPVDAGTEGENDSFGE) is disordered. Residues 25–74 (EAEYAAINSMLDQINSCLDHLEEKNDHLHARLQELLESNRQTRLEFQQQL) are a coiled coil. Ser-82 bears the Phosphoserine mark.

This sequence belongs to the UPF0184 (EST00098) family.

The protein localises to the cell junction. It is found in the cytoplasm. Its subcellular location is the cytoskeleton. Functionally, essential for intermediate filament organization in intestinal cells, interacts with intermediate filament and regulates intestinal lumen morphology. The protein is Bublin coiled-coil protein of Mus musculus (Mouse).